The primary structure comprises 126 residues: Fluoride-specific ion channel FluC 1 (126 aa).

The next 3 helical transmembrane spans lie at 37-57 (HWGT…VLAL), 67-87 (IALL…TFVV), and 98-118 (LLAA…AAAA). The Na(+) site is built by Gly77 and Ser80.

This sequence belongs to the fluoride channel Fluc/FEX (TC 1.A.43) family.

Its subcellular location is the cell inner membrane. The enzyme catalyses fluoride(in) = fluoride(out). With respect to regulation, na(+) is not transported, but it plays an essential structural role and its presence is essential for fluoride channel function. Its function is as follows. Fluoride-specific ion channel. Important for reducing fluoride concentration in the cell, thus reducing its toxicity. The sequence is that of Fluoride-specific ion channel FluC 1 from Parasynechococcus marenigrum (strain WH8102).